A 258-amino-acid chain; its full sequence is Transcription initiation factor TFIID subunit 9B (258 aa).

The residue at position 1 (Met1) is an N-acetylmethionine. Position 147 is a phosphoserine (Ser147). Thr159 and Thr174 each carry phosphothreonine. At Ser177 the chain carries Phosphoserine. A compositionally biased stretch (polar residues) spans Ser227–Asn236. Residues Ser227–Met258 are disordered. Residues Asp244 to Met258 show a composition bias toward acidic residues.

It belongs to the TAF9 family. Binds TAF5 and TAF6. Component of TFIID and the TATA-binding protein-free TAF complex (TFTC). TFIID is composed of TATA binding protein (TBP) and a number of TBP-associated factors (TAFs). Binds N-terminal domain of p53/TP53 which is essential for transcription.

Its subcellular location is the nucleus. In terms of biological role, essential for cell viability. TAF9 and TAF9L are involved in transcriptional activation as well as repression of distinct but overlapping sets of genes. May have a role in gene regulation associated with apoptosis. TAFs are components of the transcription factor IID (TFIID) complex, the TBP-free TAFII complex (TFTC), the PCAF histone acetylase complex and the STAGA transcription coactivator-HAT complex. TFIID or TFTC are essential for the regulation of RNA polymerase II-mediated transcription. The protein is Transcription initiation factor TFIID subunit 9B (Taf9b) of Rattus norvegicus (Rat).